The following is a 661-amino-acid chain: Heme transporter BhuA (661 aa).

Residues 1–23 form the signal peptide; the sequence is MKFTRTLVLASTSLLATVATSQA. The TBDR plug domain maps to 48–159; that stretch reads KDNIEATGGT…AAGAIRYETV (112 aa). Positions 170–661 constitute a TBDR beta-barrel domain; the sequence is TFGARIIGSY…TFTFQTAFKF (492 aa).

It belongs to the TonB-dependent receptor family.

The protein resides in the cell outer membrane. In terms of biological role, heme transporter. This chain is Heme transporter BhuA (bhuA), found in Brucella ovis (strain ATCC 25840 / 63/290 / NCTC 10512).